Consider the following 135-residue polypeptide: Large ribosomal subunit protein bL19 (135 aa).

The protein belongs to the bacterial ribosomal protein bL19 family.

Functionally, this protein is located at the 30S-50S ribosomal subunit interface and may play a role in the structure and function of the aminoacyl-tRNA binding site. This Xanthomonas oryzae pv. oryzae (strain KACC10331 / KXO85) protein is Large ribosomal subunit protein bL19.